Reading from the N-terminus, the 248-residue chain is Triosephosphate isomerase (248 aa).

Asparagine 10 and lysine 12 together coordinate substrate. The Electrophile role is filled by histidine 95. Glutamate 165 acts as the Proton acceptor in catalysis.

Belongs to the triosephosphate isomerase family. In terms of assembly, homodimer.

The protein localises to the cytoplasm. It catalyses the reaction D-glyceraldehyde 3-phosphate = dihydroxyacetone phosphate. Its pathway is carbohydrate biosynthesis; gluconeogenesis. The protein operates within carbohydrate degradation; glycolysis; D-glyceraldehyde 3-phosphate from glycerone phosphate: step 1/1. The chain is Triosephosphate isomerase (TPI1) from Candida albicans (strain SC5314 / ATCC MYA-2876) (Yeast).